A 446-amino-acid polypeptide reads, in one-letter code: Maturase K (446 aa).

Belongs to the intron maturase 2 family. MatK subfamily.

The protein localises to the plastid. It is found in the chloroplast. Functionally, usually encoded in the trnK tRNA gene intron. Probably assists in splicing its own and other chloroplast group II introns. This chain is Maturase K, found in Phalaenopsis aphrodite subsp. formosana (Moth orchid).